A 385-amino-acid polypeptide reads, in one-letter code: Outer membrane protein P2 (385 aa).

The signal sequence occupies residues 1–20 (MKKTLAALIVGAFAASAANA).

It belongs to the Gram-negative porin family. Homotrimer.

The protein resides in the cell outer membrane. Its function is as follows. Forms pores that allow passive diffusion of small molecules across the outer membrane. This chain is Outer membrane protein P2 (ompP2), found in Haemophilus influenzae.